The primary structure comprises 117 residues: Holo-[acyl-carrier-protein] synthase (117 aa).

Residues aspartate 8 and glutamate 58 each coordinate Mg(2+).

The protein belongs to the P-Pant transferase superfamily. AcpS family. Mg(2+) is required as a cofactor.

Its subcellular location is the cytoplasm. It carries out the reaction apo-[ACP] + CoA = holo-[ACP] + adenosine 3',5'-bisphosphate + H(+). Its function is as follows. Transfers the 4'-phosphopantetheine moiety from coenzyme A to a Ser of acyl-carrier-protein. This is Holo-[acyl-carrier-protein] synthase from Shouchella clausii (strain KSM-K16) (Alkalihalobacillus clausii).